The chain runs to 348 residues: S-adenosylmethionine:tRNA ribosyltransferase-isomerase (348 aa).

This sequence belongs to the QueA family. Monomer.

It localises to the cytoplasm. The catalysed reaction is 7-aminomethyl-7-carbaguanosine(34) in tRNA + S-adenosyl-L-methionine = epoxyqueuosine(34) in tRNA + adenine + L-methionine + 2 H(+). It participates in tRNA modification; tRNA-queuosine biosynthesis. In terms of biological role, transfers and isomerizes the ribose moiety from AdoMet to the 7-aminomethyl group of 7-deazaguanine (preQ1-tRNA) to give epoxyqueuosine (oQ-tRNA). In Polynucleobacter necessarius subsp. necessarius (strain STIR1), this protein is S-adenosylmethionine:tRNA ribosyltransferase-isomerase.